We begin with the raw amino-acid sequence, 396 residues long: MSGAKRCPDCGSSEIVEDAHYSQDQLVCADCGCILSEGLITTTVSEETSLQAVRYSDSTGENDSVTYCMKRGIIRVRDLCRVLRLPDGFVDTALSYYKQAVGLPLYRLVSIEKKEIIVGCCVYITCRQQQWPITMGTICSLIYAKKELFASLFMDIVQVLKVDVPSISLQNLVKSHCRSFKLFKDSSEVPPQYAEKLDTVSERTVQTVELAYETWLVTGRHPIPMITAAAYISWQSFQPSRRLSCSLSRFCKLSDVDMPPPSTIRLKELQETLIKLAYHLPWLKILSLNRKNIVQHLGDLLKHRALLLRRALAVTEAELSKGTEASSSTDQLNSTLVFLPPCVSNPKKRSRSIAFPCGDLDITGDEEISDSEIEQYLRTPAEMKDYQQVQSCISSV.

Residues 3 to 36 (GAKRCPDCGSSEIVEDAHYSQDQLVCADCGCILS) form a TFIIB-type zinc finger. 4 residues coordinate Zn(2+): cysteine 7, cysteine 10, cysteine 28, and cysteine 31. Repeat 2 spans residues 173-249 (VKSHCRSFKL…SRRLSCSLSR (77 aa)). Cysteine 342 bears the Cysteine sulfenic acid (-SOH) mark.

It belongs to the TFIIB family. As to quaternary structure, component of TFIIIB complexes. Interacts with TBP and forms a ternary complex with TBp and target DNA sequences. In response to oxidative stress, a Cys-residue is reversibly oxidized to cysteine sulfenic acid. This impairs formation of a ternary complex with TBP and DNA and down-regulates expression of target genes in response to oxidative stress.

It localises to the nucleus. Functionally, general activator of RNA polymerase III transcription. Factor exclusively required for RNA polymerase III transcription of genes with promoter elements upstream of the initiation sites. Contributes to the regulation of gene expression; functions as activator in the absence of oxidative stress. Down-regulates expression of target genes in response to oxidative stress. Overexpression protects cells against apoptosis in response to oxidative stress. This Xenopus laevis (African clawed frog) protein is Transcription factor IIIB 50 kDa subunit (brf2).